Consider the following 416-residue polypeptide: CCA-adding enzyme (416 aa).

2 residues coordinate ATP: S42 and K45. 2 residues coordinate CTP: S42 and K45. D54, D56, and D107 together coordinate Mg(2+). Residues H130, K150, and Y159 each coordinate ATP. 3 residues coordinate CTP: H130, K150, and Y159.

This sequence belongs to the tRNA nucleotidyltransferase/poly(A) polymerase family. Archaeal CCA-adding enzyme subfamily. As to quaternary structure, homodimer. The cofactor is Mg(2+).

It catalyses the reaction a tRNA precursor + 2 CTP + ATP = a tRNA with a 3' CCA end + 3 diphosphate. The catalysed reaction is a tRNA with a 3' CCA end + 2 CTP + ATP = a tRNA with a 3' CCACCA end + 3 diphosphate. Catalyzes the addition and repair of the essential 3'-terminal CCA sequence in tRNAs without using a nucleic acid template. Adds these three nucleotides in the order of C, C, and A to the tRNA nucleotide-73, using CTP and ATP as substrates and producing inorganic pyrophosphate. tRNA 3'-terminal CCA addition is required both for tRNA processing and repair. Also involved in tRNA surveillance by mediating tandem CCA addition to generate a CCACCA at the 3' terminus of unstable tRNAs. While stable tRNAs receive only 3'-terminal CCA, unstable tRNAs are marked with CCACCA and rapidly degraded. This Sulfolobus acidocaldarius (strain ATCC 33909 / DSM 639 / JCM 8929 / NBRC 15157 / NCIMB 11770) protein is CCA-adding enzyme.